Here is a 264-residue protein sequence, read N- to C-terminus: Thiazole synthase (264 aa).

Lys-98 acts as the Schiff-base intermediate with DXP in catalysis. Residues Gly-159, 185 to 186 (AG), and 207 to 208 (AT) each bind 1-deoxy-D-xylulose 5-phosphate.

This sequence belongs to the ThiG family. In terms of assembly, homotetramer. Forms heterodimers with either ThiH or ThiS.

The protein resides in the cytoplasm. The enzyme catalyses [ThiS sulfur-carrier protein]-C-terminal-Gly-aminoethanethioate + 2-iminoacetate + 1-deoxy-D-xylulose 5-phosphate = [ThiS sulfur-carrier protein]-C-terminal Gly-Gly + 2-[(2R,5Z)-2-carboxy-4-methylthiazol-5(2H)-ylidene]ethyl phosphate + 2 H2O + H(+). It functions in the pathway cofactor biosynthesis; thiamine diphosphate biosynthesis. Catalyzes the rearrangement of 1-deoxy-D-xylulose 5-phosphate (DXP) to produce the thiazole phosphate moiety of thiamine. Sulfur is provided by the thiocarboxylate moiety of the carrier protein ThiS. In vitro, sulfur can be provided by H(2)S. This chain is Thiazole synthase, found in Mycobacterium marinum (strain ATCC BAA-535 / M).